Consider the following 361-residue polypeptide: Probable lipid desaturase ADS3.2, chloroplastic (361 aa).

A chloroplast-targeting transit peptide spans 1-57 (MMSLSTTLKPLSHFSPFVKRHNPKTNNTLFTLDTHNFTNSFWSKRGGSVSHRKHTVV). The next 2 membrane-spanning stretches (helical) occupy residues 99–118 (LVIFVGTHLLSLLAPFYFSW) and 122–139 (WVFPWLVFINGICITLSY). Positions 140-145 (HRNLSH) match the Histidine box-1 motif. Residues 177–181 (HRYHH) carry the Histidine box-2 motif. The helical transmembrane segment at 246–266 (FLFYFCGGMPLLVWGIGITIA) threads the bilayer. The short motif at 309–313 (HNNHH) is the Histidine box-3 element.

The protein belongs to the fatty acid desaturase type 1 family. Fe(2+) is required as a cofactor.

The protein localises to the plastid. It is found in the chloroplast membrane. It functions in the pathway lipid metabolism; polyunsaturated fatty acid biosynthesis. In Arabidopsis thaliana (Mouse-ear cress), this protein is Probable lipid desaturase ADS3.2, chloroplastic.